A 620-amino-acid chain; its full sequence is Chaperone protein HscA homolog (620 aa).

This sequence belongs to the heat shock protein 70 family.

Functionally, chaperone involved in the maturation of iron-sulfur cluster-containing proteins. Has a low intrinsic ATPase activity which is markedly stimulated by HscB. This Shewanella putrefaciens (strain CN-32 / ATCC BAA-453) protein is Chaperone protein HscA homolog.